The sequence spans 424 residues: MAKNIQAIRGMNDYLPGETAIWQRIEGTLKNVLGSYGYSEIRLPIVEQTPLFKRAIGEVTDVVEKEMYTFEDRNGDSLTLRPEGTAGCVRAGIEHGLLYNQEQRLWYIGPMFRHERPQKGRYRQFHQLGAEVFGLQGPDIDAELIMLTARWWRALGISEHVSLELNSIGSLEARANYRDALVAFLEQHQETLDEDCKRRMYTNPLRVLDSKNPDVQALLNDAPALGDYLDDDSREHFAGLCKLLDAAGIAYTVNQRLVRGLDYYNRTVFEWVTNSLGSQGTVCAGGRYDGLVEQLGGRATPAVGFAMGLERLVLLVQAVNPEFIASPVVDIYLVAAGAQTQSAAMTLAERLRDEMPGVKLMTNHGGGNFKKQFARADKWGARIALVLGESEVADGTVVVKDLRSGEQTAVAQDSVAAHLRTLLG.

This sequence belongs to the class-II aminoacyl-tRNA synthetase family. As to quaternary structure, homodimer.

Its subcellular location is the cytoplasm. It carries out the reaction tRNA(His) + L-histidine + ATP = L-histidyl-tRNA(His) + AMP + diphosphate + H(+). The sequence is that of Histidine--tRNA ligase from Salmonella dublin (strain CT_02021853).